A 210-amino-acid chain; its full sequence is UPF0502 protein Sama_1967 (210 aa).

This sequence belongs to the UPF0502 family.

This is UPF0502 protein Sama_1967 from Shewanella amazonensis (strain ATCC BAA-1098 / SB2B).